The primary structure comprises 442 residues: DDB1- and CUL4-associated factor 12-B (442 aa).

The span at 1-13 (MTRRPVSRKRRAT) shows a compositional bias: basic residues. The interval 1–31 (MTRRPVSRKRRATHGTGPGEQSDWDHSAHKR) is disordered. 4 WD repeats span residues 132 to 173 (SHQS…PVCV), 177 to 215 (GHNDWIFSIAWISDTMAVSGSRDGFMALWEMTDEVVNKR), 245 to 284 (PVNCKVRALAFNGNNKELGAVSLDGFFHLWKAEQTLSKLL), and 333 to 370 (EQGSGIRSVSFYEHIVTVGTGQGALLFYDIRAQRFLED).

Belongs to the WD repeat DCAF12 family. Component of the DCX(DCAF12) E3 ubiquitin ligase complex, at least composed of cul4 (cul4a or cul4b), ddb1, dcaf12 and rbx1.

The protein resides in the cytoplasm. It localises to the cytoskeleton. It is found in the microtubule organizing center. The protein localises to the centrosome. Its subcellular location is the nucleus. It functions in the pathway protein modification; protein ubiquitination. Its function is as follows. Substrate-recognition component of a DCX (DDB1-CUL4-X-box) E3 ubiquitin-protein ligase complex of the DesCEND (destruction via C-end degrons) pathway, which recognizes a C-degron located at the extreme C terminus of target proteins, leading to their ubiquitination and degradation. The C-degron recognized by the DesCEND pathway is usually a motif of less than ten residues and can be present in full-length proteins, truncated proteins or proteolytically cleaved forms. The DCX(DCAF12) complex specifically recognizes proteins with a diglutamate (Glu-Glu) at the C-terminus leading to their ubiquitination and degradation. Also directly recognizes the C-terminal glutamate-leucine (Glu-Leu) degron as an alternative degron in proteins leading to their ubiquitination and degradation. The chain is DDB1- and CUL4-associated factor 12-B (dcaf12-b) from Xenopus laevis (African clawed frog).